The primary structure comprises 98 residues: Prostate and testis expressed protein 3 (98 aa).

Residues 1–20 form the signal peptide; it reads MNKHFLLLFSLFYFIVEATS. The UPAR/Ly6 domain occupies 21–97; it reads LKCVTCHLRT…CCNSDFCNFR (77 aa). 4 disulfides stabilise this stretch: Cys-23–Cys-50, Cys-26–Cys-35, Cys-42–Cys-68, and Cys-72–Cys-88.

It belongs to the PATE family.

It is found in the secreted. The sequence is that of Prostate and testis expressed protein 3 (Pate3) from Mus musculus (Mouse).